A 365-amino-acid chain; its full sequence is Palmitoyltransferase ZDHHC20 (365 aa).

Topologically, residues 1–14 (MAPCTLWRCCQRTV) are cytoplasmic. A helical transmembrane segment spans residues 15-35 (GWVPVLFITFVVVWSYYAYVV). The Lumenal portion of the chain corresponds to 36 to 53 (ELCVFTLSGNGENGKAVV). The helical transmembrane segment at 54–74 (YLVAFHLFFVMFVWSYWMTIF) threads the bilayer. Over 75–169 (TSPASPSKEF…NNCVGFSNYK (95 aa)) the chain is Cytoplasmic. In terms of domain architecture, DHHC spans 126–176 (RYCERCQLIKPDRAHHCSACDMCILKMDHHCPWVNNCVGFSNYKFFLLFLF). Positions 128 and 131 each coordinate Zn(2+). Substrate is bound by residues Lys-135 and 140–143 (HHCS). Residues His-141, Cys-142, Cys-145, Cys-148, and His-155 each contribute to the Zn(2+) site. The active-site S-palmitoyl cysteine intermediate is the Cys-156. Cys-162 lines the Zn(2+) pocket. A helical membrane pass occupies residues 170-190 (FFLLFLFYSLLYCLFVATTVL). The Lumenal segment spans residues 191 to 207 (QYFIKFWTNELTDTRAK). The helical transmembrane segment at 208–231 (FHVLFLFFVSTMFFISVLSLLSYH) threads the bilayer. The Cytoplasmic segment spans residues 232-365 (CWLVGKNRTT…NNHVTVAIEN (134 aa)). A disordered region spans residues 301–365 (PEQASVSNQS…NNHVTVAIEN (65 aa)). A compositionally biased stretch (polar residues) spans 302–321 (EQASVSNQSESARSIGSNQP). Phosphoserine occurs at positions 305 and 330.

Belongs to the DHHC palmitoyltransferase family. Post-translationally, autopalmitoylated (in vitro).

The protein localises to the golgi apparatus membrane. It is found in the cell membrane. Its subcellular location is the cytoplasm. It localises to the perinuclear region. The protein resides in the endoplasmic reticulum membrane. The protein localises to the endoplasmic reticulum-Golgi intermediate compartment membrane. The catalysed reaction is L-cysteinyl-[protein] + hexadecanoyl-CoA = S-hexadecanoyl-L-cysteinyl-[protein] + CoA. The enzyme catalyses L-cysteinyl-[protein] + tetradecanoyl-CoA = S-tetradecanoyl-L-cysteinyl-[protein] + CoA. It catalyses the reaction L-cysteinyl-[protein] + octadecanoyl-CoA = S-octadecanoyl-L-cysteinyl-[protein] + CoA. Palmitoyltransferase that could catalyze the addition of palmitate onto various protein substrates. Catalyzes palmitoylation of Cys residues in the cytoplasmic C-terminus of EGFR, and modulates the duration of EGFR signaling by modulating palmitoylation-dependent EGFR internalization and degradation. Has a preference for acyl-CoA with C16 fatty acid chains. Can also utilize acyl-CoA with C14 and C18 fatty acid chains. May palmitoylate CALHM1 subunit of gustatory voltage-gated ion channels and modulate channel gating and kinetics. The chain is Palmitoyltransferase ZDHHC20 from Bos taurus (Bovine).